The sequence spans 82 residues: Turripeptide Gsp9.1 (82 aa).

Positions 1 to 23 (MMAKLMITVMMVLLLSLQQGADG) are cleaved as a signal peptide. The propeptide occupies 24–46 (RSKRWRKNQMAASSIMRNLITAR). 4-hydroxyproline is present on residues Pro-49 and Pro-50. 3 disulfide bridges follow: Cys-53/Cys-68, Cys-58/Cys-72, and Cys-64/Cys-79. Glu-60 and Glu-63 each carry 4-carboxyglutamate.

This sequence belongs to the Pg turripeptide superfamily. Expressed by the venom duct.

Its subcellular location is the secreted. This Gemmula speciosa (Splendid gem-turris) protein is Turripeptide Gsp9.1.